Here is a 221-residue protein sequence, read N- to C-terminus: Oxaloacetate tautomerase FAHD1, mitochondrial (221 aa).

The transit peptide at 1–24 (MASTKPLSRFWEWGKNIVCVGRNY) directs the protein to the mitochondrion. At Ser37 the chain carries Phosphoserine. The Mg(2+) site is built by Glu68, Glu70, and Asp99. Lys110 carries the N6-acetyllysine modification. Lys112 is subject to N6-succinyllysine.

The protein belongs to the FAH family. Homodimer. The cofactor is Mg(2+). Mn(2+) is required as a cofactor.

Its subcellular location is the mitochondrion. The protein resides in the cytoplasm. It is found in the cytosol. It carries out the reaction oxaloacetate = enol-oxaloacetate. The enzyme catalyses oxaloacetate + H(+) = pyruvate + CO2. The catalysed reaction is a 3-acylpyruvate + H2O = a carboxylate + pyruvate + H(+). It catalyses the reaction acetylpyruvate + H2O = acetate + pyruvate + H(+). It carries out the reaction 3-fumarylpyruvate + H2O = fumarate + pyruvate + H(+). With respect to regulation, oxaloacetate decarboxylation is competitively inhibited by oxalate. In terms of biological role, tautomerase that converts enol-oxaloacetate, a strong inhibitor of succinate dehydrogenase, to the physiological keto form of oxaloacetate. It is thereby required to maximize aerobic respiration efficiency by preventing succinate dehydrogenase inhibition. Also acts as a weak oxaloacetate decarboxylase (ODx), catalyzing the decarboxylation of oxaloacetate (OAA) to pyruvate and CO(2), and as such is likely a regulatory enzyme in the TCA cycle. Also displays acylpyruvase activity, being able to hydrolyze acetylpyruvate and fumarylpyruvate in vitro. This Rattus norvegicus (Rat) protein is Oxaloacetate tautomerase FAHD1, mitochondrial.